The chain runs to 70 residues: Protein SlyX homolog (70 aa).

The protein belongs to the SlyX family.

The chain is Protein SlyX homolog from Nitrobacter winogradskyi (strain ATCC 25391 / DSM 10237 / CIP 104748 / NCIMB 11846 / Nb-255).